We begin with the raw amino-acid sequence, 322 residues long: uncharacterized protein (322 aa).

This is an uncharacterized protein from Acanthamoeba polyphaga (Amoeba).